The following is a 101-amino-acid chain: Small ribosomal subunit protein uS14 (101 aa).

The protein belongs to the universal ribosomal protein uS14 family. As to quaternary structure, part of the 30S ribosomal subunit. Contacts proteins S3 and S10.

Binds 16S rRNA, required for the assembly of 30S particles and may also be responsible for determining the conformation of the 16S rRNA at the A site. The chain is Small ribosomal subunit protein uS14 from Albidiferax ferrireducens (strain ATCC BAA-621 / DSM 15236 / T118) (Rhodoferax ferrireducens).